The following is a 199-amino-acid chain: Putative 3-methyladenine DNA glycosylase (199 aa).

Belongs to the DNA glycosylase MPG family.

This chain is Putative 3-methyladenine DNA glycosylase, found in Chlorobium phaeobacteroides (strain BS1).